Reading from the N-terminus, the 84-residue chain is Conophysin-R (84 aa).

Disulfide bonds link Cys-6–Cys-46, Cys-9–Cys-20, Cys-14–Cys-36, Cys-21–Cys-26, Cys-53–Cys-71, Cys-65–Cys-83, and Cys-72–Cys-77.

In terms of tissue distribution, expressed by the venom duct.

It localises to the secreted. Targets vasopressin-oxytocin related receptors. No effect observed when injected into goldfish or into mice. This is Conophysin-R from Conus radiatus (Rayed cone).